A 114-amino-acid chain; its full sequence is Putative cysteine proteinase inhibitor 9 (114 aa).

A signal peptide spans 1–23; the sequence is MRTSSLVLFAAVAVFGAACTAAA.

It belongs to the cystatin family. Phytocystatin subfamily.

It localises to the secreted. Functionally, specific inhibitor of cysteine proteinases. Probably involved in the regulation of endogenous processes and in defense against pests and pathogens. This is Putative cysteine proteinase inhibitor 9 from Oryza sativa subsp. japonica (Rice).